The sequence spans 39 residues: Photosystem II reaction center protein X (39 aa).

Residues 11-31 (SLLWGAIVVVIPLSAALLFIS) traverse the membrane as a helical segment.

This sequence belongs to the PsbX family. Type 1 subfamily. In terms of assembly, PSII is composed of 1 copy each of membrane proteins PsbA, PsbB, PsbC, PsbD, PsbE, PsbF, PsbH, PsbI, PsbJ, PsbK, PsbL, PsbM, PsbT, PsbX, PsbY, PsbZ, Psb30/Ycf12, at least 3 peripheral proteins of the oxygen-evolving complex and a large number of cofactors. It forms dimeric complexes.

The protein resides in the plastid. It is found in the cyanelle thylakoid membrane. Its function is as follows. Involved in the binding and/or turnover of quinones at the Q(B) site of photosystem II (PSII). PSII is a light-driven water plastoquinone oxidoreductase, using light energy to abstract electrons from H(2)O, generating a proton gradient subsequently used for ATP formation. This chain is Photosystem II reaction center protein X, found in Cyanophora paradoxa.